Here is a 966-residue protein sequence, read N- to C-terminus: Insulin-degrading enzyme-like 2 (966 aa).

His-71 lines the Zn(2+) pocket. Glu-74 acts as the Proton acceptor in catalysis. A Zn(2+)-binding site is contributed by His-75. Glu-145 is a catalytic residue. Residue Glu-152 participates in Zn(2+) binding.

This sequence belongs to the peptidase M16 family. Zn(2+) serves as cofactor.

This chain is Insulin-degrading enzyme-like 2, found in Arabidopsis thaliana (Mouse-ear cress).